A 219-amino-acid chain; its full sequence is Ran-specific GTPase-activating protein 1 (219 aa).

Basic and acidic residues-rich tracts occupy residues 1 to 12 (MAEVERKEEQAK), 33 to 45 (AVGDGKEGGEAKK), and 57 to 72 (PRKDEGKGGEERDNID). Positions 1 to 72 (MAEVERKEEQ…KGGEERDNID (72 aa)) are disordered. Positions 70–210 (NIDAAEVVEK…YDLGRAHNEK (141 aa)) constitute a RanBD1 domain.

The protein belongs to the RANBP1 family.

Its subcellular location is the cytoplasm. It is found in the nucleus. Its function is as follows. Important for the export of protein containing nuclear export signal (NES) out of the nucleus. This Encephalitozoon cuniculi (strain GB-M1) (Microsporidian parasite) protein is Ran-specific GTPase-activating protein 1 (YRB1).